The sequence spans 270 residues: 4-hydroxy-tetrahydrodipicolinate reductase (270 aa).

NAD(+) is bound by residues 8-13 (GAAGRM) and E34. NADP(+) is bound at residue R35. NAD(+) contacts are provided by residues 98 to 100 (GST) and 122 to 125 (SPNM). H155 functions as the Proton donor/acceptor in the catalytic mechanism. H156 provides a ligand contact to (S)-2,3,4,5-tetrahydrodipicolinate. The Proton donor role is filled by K159. Residue 165-166 (GT) participates in (S)-2,3,4,5-tetrahydrodipicolinate binding.

The protein belongs to the DapB family.

It is found in the cytoplasm. The catalysed reaction is (S)-2,3,4,5-tetrahydrodipicolinate + NAD(+) + H2O = (2S,4S)-4-hydroxy-2,3,4,5-tetrahydrodipicolinate + NADH + H(+). It carries out the reaction (S)-2,3,4,5-tetrahydrodipicolinate + NADP(+) + H2O = (2S,4S)-4-hydroxy-2,3,4,5-tetrahydrodipicolinate + NADPH + H(+). The protein operates within amino-acid biosynthesis; L-lysine biosynthesis via DAP pathway; (S)-tetrahydrodipicolinate from L-aspartate: step 4/4. Catalyzes the conversion of 4-hydroxy-tetrahydrodipicolinate (HTPA) to tetrahydrodipicolinate. This Anaeromyxobacter dehalogenans (strain 2CP-1 / ATCC BAA-258) protein is 4-hydroxy-tetrahydrodipicolinate reductase.